Reading from the N-terminus, the 983-residue chain is Ephrin type-A receptor 3 (983 aa).

The first 19 residues, 1-19, serve as a signal peptide directing secretion; sequence MDRRRLPLLLLCAALGSAG. Topologically, residues 20-540 are extracellular; that stretch reads RLSARPGNEV…SFSISSENSQ (521 aa). The 179-residue stretch at 28–206 folds into the Eph LBD domain; it reads EVNLLDSKTI…YFKKCPFTVK (179 aa). N-linked (GlcNAc...) asparagine glycans are attached at residues Asn231, Asn336, Asn390, Asn403, and Asn492. Fibronectin type-III domains follow at residues 324–434 and 435–530; these read PPSA…TNQA and APSP…TSPD. The chain crosses the membrane as a helical span at residues 541–564; the sequence is VVMIAISAAVAIILLTVVVYVLIG. At 565-983 the chain is on the cytoplasmic side; that stretch reads RFCGYKKSKH…THTKNSPVPV (419 aa). A phosphotyrosine; by autocatalysis mark is found at Tyr596 and Tyr602. The 262-residue stretch at 621–882 folds into the Protein kinase domain; sequence ISIDKVVGAG…QIVSILDKLI (262 aa). ATP is bound by residues 628–633, Lys653, and 700–706; these read GAGEFG and EYMENGS. Tyr701 is subject to Phosphotyrosine; by autocatalysis. Asp746 serves as the catalytic Proton acceptor. 750-751 lines the ATP pocket; it reads RN. Tyr779 carries the phosphotyrosine; by autocatalysis modification. The region spanning 911 to 975 is the SAM domain; it reads SAFRTAGDWL…VSSIKTLETH (65 aa). The short motif at 981–983 is the PDZ-binding element; sequence VPV.

This sequence belongs to the protein kinase superfamily. Tyr protein kinase family. Ephrin receptor subfamily. Heterotetramer upon binding of the ligand. The heterotetramer is composed of an ephrin dimer and a receptor dimer. Oligomerization is probably required to induce biological responses. Autophosphorylates upon activation by EFNA5. Highly expressed in the developing brain and embryonic tissues. In adult, the greatest levels of expression occur in the brain. It is expressed in a graded manner across the retina with the highest expression at its temporal pole. Detectable in all other adult tissues examined, except the liver.

Its subcellular location is the cell membrane. The catalysed reaction is L-tyrosyl-[protein] + ATP = O-phospho-L-tyrosyl-[protein] + ADP + H(+). Functionally, receptor tyrosine kinase which binds promiscuously membrane-bound ephrin family ligands residing on adjacent cells, leading to contact-dependent bidirectional signaling into neighboring cells. The signaling pathway downstream of the receptor is referred to as forward signaling while the signaling pathway downstream of the ephrin ligand is referred to as reverse signaling. Highly promiscuous for ephrin-A ligands it binds preferentially EFNA5. Upon activation by EFNA5 regulates cell-cell adhesion, cytoskeletal organization and cell migration. Plays a role in cardiac cells migration and differentiation probably through activation by EFNA1. Involved in the retinotectal mapping of neurons. May also control the segregation but not the guidance of motor and sensory axons during neuromuscular circuit development. This is Ephrin type-A receptor 3 (EPHA3) from Gallus gallus (Chicken).